The sequence spans 259 residues: Putative aldolase class 2 protein PA3430 (259 aa).

Zn(2+)-binding residues include His-113, His-115, and His-176.

This sequence belongs to the aldolase class II family. Zn(2+) is required as a cofactor.

The sequence is that of Putative aldolase class 2 protein PA3430 from Pseudomonas aeruginosa (strain ATCC 15692 / DSM 22644 / CIP 104116 / JCM 14847 / LMG 12228 / 1C / PRS 101 / PAO1).